The sequence spans 316 residues: MISSLSASSSLVSSFVAVKATPVTGPLIPRRDLLSIRIRASSNQNSSGYCFPEKFKSFAKSAILIGAAVSMTGKFSTLPVKAESPVTTIEKTYEEVKEEKLSEITPLSELLDSTPEAVETLRSLLQQKLEKGEDEEALKLLERLVAAQPEETEWKFLMARLLGEMGRPENARQMFEEILQRNPLSFEALFENALLMDRSGEGNAVLQRLEDALAVAEAEYLVKEARDVRLIIAQIHFLQKNVDEALKSYEQLTKEDPKDFRPYFCRGMIYSLLDKNVEAKEQFAKYRELSPKKFEVEGYLRTPLSKMKLFGGSEEN.

The N-terminal 39 residues, 1-39, are a transit peptide targeting the chloroplast; it reads MISSLSASSSLVSSFVAVKATPVTGPLIPRRDLLSIRIR. TPR repeat units follow at residues 118–151, 152–185, 226–259, and 261–293; these read VETL…QPEE, TEWK…NPLS, RDVR…DPKD, and RPYF…SPKK.

In terms of tissue distribution, ubiquitous. Preferentially expressed in newly formed green tissues.

The protein resides in the plastid. Its subcellular location is the chloroplast. Its function is as follows. Required for the early stage of chloroplast development. May be involved in chloroplast protein biosynthesis and/or degradation. This Arabidopsis thaliana (Mouse-ear cress) protein is protein SLOW GREEN 1, chloroplastic.